The primary structure comprises 349 residues: MTSAADQQPPPIRTDVLIVGAGPVGLFAAFEAGVIGLSCQIVDGLDKVGGQCIELYPDKPIYDIPAIASCTARELVERLLAQCKPFDPPIHLEQRVESVEQNDDGRWTVRTDRGLVFDVAAILLAAGNGAFVPQKLALAEAVPLESRHVHYSVPRLADFADKVVVVAGGGDSALDWALALRKVARRVTLVHRRSGFSAADSSVASMRRAVEAGEMDFIVGAIAGLNVEGDALKSITLRHIEGETQLAAEHLVALYGLVADLGPIAQWGLSIHAGRVDVDTSNYESSRPGIFAVGDIANYPNKQKLILSGFHEASLALRRAYSYAYPDKKRVHVHSSYDAKLAEKVSATG.

Positions 43, 51, 56, 96, 131, 295, and 336 each coordinate FAD.

Belongs to the ferredoxin--NADP reductase type 2 family. Homodimer. FAD is required as a cofactor.

The enzyme catalyses 2 reduced [2Fe-2S]-[ferredoxin] + NADP(+) + H(+) = 2 oxidized [2Fe-2S]-[ferredoxin] + NADPH. The protein is Ferredoxin--NADP reductase of Paraburkholderia phytofirmans (strain DSM 17436 / LMG 22146 / PsJN) (Burkholderia phytofirmans).